Reading from the N-terminus, the 102-residue chain is Small ribosomal subunit protein uS10 (102 aa).

Belongs to the universal ribosomal protein uS10 family. Part of the 30S ribosomal subunit.

Functionally, involved in the binding of tRNA to the ribosomes. The chain is Small ribosomal subunit protein uS10 from Syntrophus aciditrophicus (strain SB).